Here is a 141-residue protein sequence, read N- to C-terminus: Large ribosomal subunit protein uL11c (141 aa).

Belongs to the universal ribosomal protein uL11 family. Part of the ribosomal stalk of the 50S ribosomal subunit. Interacts with L10 and the large rRNA to form the base of the stalk. L10 forms an elongated spine to which L12 dimers bind in a sequential fashion forming a multimeric L10(L12)X complex.

It is found in the plastid. Its subcellular location is the cyanelle. Functionally, forms part of the ribosomal stalk which helps the ribosome interact with GTP-bound translation factors. This chain is Large ribosomal subunit protein uL11c, found in Cyanophora paradoxa.